The primary structure comprises 85 residues: Sec-independent protein translocase protein TatA (85 aa).

The helical transmembrane segment at 1 to 21 (MGSFSIWHWLIVLVIIMMVFG) threads the bilayer. Over residues 39–51 (FKDGMREGQEDKP) the composition is skewed to basic and acidic residues. The disordered stretch occupies residues 39-85 (FKDGMREGQEDKPAGSQQPQQTAGQPPRELHDATTIDVEARDKSKQG). Polar residues predominate over residues 53–62 (GSQQPQQTAG). Positions 66-85 (RELHDATTIDVEARDKSKQG) are enriched in basic and acidic residues.

This sequence belongs to the TatA/E family. As to quaternary structure, the Tat system comprises two distinct complexes: a TatABC complex, containing multiple copies of TatA, TatB and TatC subunits, and a separate TatA complex, containing only TatA subunits. Substrates initially bind to the TatABC complex, which probably triggers association of the separate TatA complex to form the active translocon.

It localises to the cell inner membrane. Functionally, part of the twin-arginine translocation (Tat) system that transports large folded proteins containing a characteristic twin-arginine motif in their signal peptide across membranes. TatA could form the protein-conducting channel of the Tat system. In Ralstonia pickettii (strain 12J), this protein is Sec-independent protein translocase protein TatA.